The following is a 1248-amino-acid chain: Structural maintenance of chromosomes protein 1B (1248 aa).

32–39 (GPNGSGKS) provides a ligand contact to ATP. Residues 163–502 (EFIGEYEAKK…EGKRQQKRAE (340 aa)) are a coiled coil. The SMC hinge domain maps to 514 to 629 (SVFGRLLDLC…ETVEEARHIA (116 aa)). An N6-acetyllysine mark is found at Lys648, Lys713, and Lys1032. A coiled-coil region spans residues 666-912 (WDEKELHNLR…REVGKLQKEV (247 aa)). Basic and acidic residues predominate over residues 1219–1228 (PDTEDQEGSR). Residues 1219–1248 (PDTEDQEGSRSHRKPRVPRVSMSPKSPQSR) form a disordered region.

This sequence belongs to the SMC family. SMC1 subfamily. In terms of assembly, forms a heterodimer with SMC3. Component of a meiosis-specific cohesin complex, probably composed of the SMC1B and SMC3 heterodimer attached via their SMC hinge domain, RAD21 (or its meiosis-specific related protein REC8), which link them, and STAG3, which interacts with RAD21 or REC8. The cohesin complex interacts with the cohesin loading complex subunits NIPBL/Scc2 (via HEAT repeats) and MAU2/Scc4. NIPBL directly contacts all members of the complex, RAD21, SMC1A/B, SMC3 and STAG1. As to expression, spermatocytes (at protein level). Testis and ovary specific. Not expressed in somatic cells.

The protein localises to the nucleus. It is found in the chromosome. It localises to the centromere. Its function is as follows. Meiosis-specific component of cohesin complex. Required for the maintenance of meiotic cohesion, but not, or only to a minor extent, for its establishment. Contributes to axial element (AE) formation and the organization of chromatin loops along the AE. Plays a key role in synapsis, recombination and chromosome movements. The cohesin complex is required for the cohesion of sister chromatids after DNA replication. The cohesin complex apparently forms a large proteinaceous ring within which sister chromatids can be trapped. At anaphase, the complex is cleaved and dissociates from chromatin, allowing sister chromatids to segregate. The meiosis-specific cohesin complex probably replaces mitosis specific cohesin complex when it dissociates from chromatin during prophase I. This chain is Structural maintenance of chromosomes protein 1B (Smc1b), found in Mus musculus (Mouse).